Consider the following 393-residue polypeptide: Phosphoglycerate kinase (393 aa).

Residues 22–24 (DFN), arginine 37, 60–63 (HLGR), arginine 119, and arginine 152 contribute to the substrate site. ATP contacts are provided by residues lysine 202, glycine 293, glutamate 324, and 350-353 (GGDS).

The protein belongs to the phosphoglycerate kinase family. Monomer.

The protein resides in the cytoplasm. It catalyses the reaction (2R)-3-phosphoglycerate + ATP = (2R)-3-phospho-glyceroyl phosphate + ADP. Its pathway is carbohydrate degradation; glycolysis; pyruvate from D-glyceraldehyde 3-phosphate: step 2/5. The sequence is that of Phosphoglycerate kinase from Borrelia garinii subsp. bavariensis (strain ATCC BAA-2496 / DSM 23469 / PBi) (Borreliella bavariensis).